A 282-amino-acid chain; its full sequence is NADPH-dependent 7-cyano-7-deazaguanine reductase (282 aa).

A substrate-binding site is contributed by 88-90 (IES). 90–91 (SK) contacts NADPH. Cys-190 (thioimide intermediate) is an active-site residue. Catalysis depends on Asp-197, which acts as the Proton donor. Residue 229 to 230 (HE) coordinates substrate. 258-259 (RG) is an NADPH binding site.

Belongs to the GTP cyclohydrolase I family. QueF type 2 subfamily. Homodimer.

It is found in the cytoplasm. It carries out the reaction 7-aminomethyl-7-carbaguanine + 2 NADP(+) = 7-cyano-7-deazaguanine + 2 NADPH + 3 H(+). It participates in tRNA modification; tRNA-queuosine biosynthesis. Functionally, catalyzes the NADPH-dependent reduction of 7-cyano-7-deazaguanine (preQ0) to 7-aminomethyl-7-deazaguanine (preQ1). The protein is NADPH-dependent 7-cyano-7-deazaguanine reductase of Escherichia coli O157:H7.